The primary structure comprises 841 residues: Neuronal tyrosine-phosphorylated phosphoinositide-3-kinase adapter 1 (841 aa).

5 disordered regions span residues M1–R45, P64–L448, R655–I679, R745–P769, and L812–H833. A compositionally biased stretch (basic and acidic residues) spans T8–S25. The span at K26–G39 shows a compositional bias: low complexity. The interval S76–P186 is involved in CYFIP1- and NCKAP1-binding. Over residues V94–G103 the composition is skewed to gly residues. The span at P114 to S123 shows a compositional bias: basic residues. The segment covering S167–F176 has biased composition (polar residues). The span at F224 to G243 shows a compositional bias: gly residues. A compositionally biased stretch (acidic residues) spans S252–Y261. A compositionally biased stretch (pro residues) spans G279–L295. Positions P759–P769 are enriched in pro residues.

It belongs to the NYAP family. Interacts with ACOT9, ARHGAP26 and PIK3R2. Interacts with components of the WAVE1 complex, CYFIP1 and NCKAP1; this interaction mediates PI3K-WAVE1 association and actin cytoskeleton remodeling. Phosphorylated on tyrosine residues by FYN upon stimulation with CNTN5.

Functionally, activates PI3K and concomitantly recruits the WAVE1 complex to the close vicinity of PI3K and regulates neuronal morphogenesis. The polypeptide is Neuronal tyrosine-phosphorylated phosphoinositide-3-kinase adapter 1 (NYAP1) (Homo sapiens (Human)).